The primary structure comprises 368 residues: NAD(P)H-quinone oxidoreductase subunit 1, chloroplastic (368 aa).

Helical transmembrane passes span 27 to 47, 97 to 117, 130 to 150, 166 to 186, 204 to 224, 249 to 269, 270 to 290, 305 to 325, and 348 to 368; these read FLWI…GVLV, WLFN…YLVI, IGVF…LMAG, AAQS…IALL, FLSW…IASL, YSGM…LVSS, LFVT…FSLF, VISI…FLFI, and FLLP…LFLL.

This sequence belongs to the complex I subunit 1 family. As to quaternary structure, NDH is composed of at least 16 different subunits, 5 of which are encoded in the nucleus.

The protein localises to the plastid. It is found in the chloroplast thylakoid membrane. It catalyses the reaction a plastoquinone + NADH + (n+1) H(+)(in) = a plastoquinol + NAD(+) + n H(+)(out). The enzyme catalyses a plastoquinone + NADPH + (n+1) H(+)(in) = a plastoquinol + NADP(+) + n H(+)(out). NDH shuttles electrons from NAD(P)H:plastoquinone, via FMN and iron-sulfur (Fe-S) centers, to quinones in the photosynthetic chain and possibly in a chloroplast respiratory chain. The immediate electron acceptor for the enzyme in this species is believed to be plastoquinone. Couples the redox reaction to proton translocation, and thus conserves the redox energy in a proton gradient. The protein is NAD(P)H-quinone oxidoreductase subunit 1, chloroplastic of Marchantia polymorpha (Common liverwort).